The primary structure comprises 359 residues: tRNA N6-adenosine threonylcarbamoyltransferase (359 aa).

Residues histidine 115 and histidine 119 each contribute to the Fe cation site. Substrate-binding positions include 137 to 141 (LVSGG), aspartate 170, glycine 183, and asparagine 283. Aspartate 311 provides a ligand contact to Fe cation. A disordered region spans residues 328 to 359 (APDSLDIAPRSRWPLDEKSAPVFGTGRRGAKA).

Belongs to the KAE1 / TsaD family. Fe(2+) is required as a cofactor.

It is found in the cytoplasm. It carries out the reaction L-threonylcarbamoyladenylate + adenosine(37) in tRNA = N(6)-L-threonylcarbamoyladenosine(37) in tRNA + AMP + H(+). In terms of biological role, required for the formation of a threonylcarbamoyl group on adenosine at position 37 (t(6)A37) in tRNAs that read codons beginning with adenine. Is involved in the transfer of the threonylcarbamoyl moiety of threonylcarbamoyl-AMP (TC-AMP) to the N6 group of A37, together with TsaE and TsaB. TsaD likely plays a direct catalytic role in this reaction. In Brucella canis (strain ATCC 23365 / NCTC 10854 / RM-666), this protein is tRNA N6-adenosine threonylcarbamoyltransferase.